The primary structure comprises 329 residues: Glycerol-3-phosphate dehydrogenase [NAD(P)+] (329 aa).

4 residues coordinate NADPH: serine 10, tryptophan 11, arginine 31, and lysine 105. Residues lysine 105, glycine 134, and serine 136 each contribute to the sn-glycerol 3-phosphate site. Alanine 138 contributes to the NADPH binding site. Sn-glycerol 3-phosphate is bound by residues lysine 189, aspartate 242, serine 252, arginine 253, and asparagine 254. Residue lysine 189 is the Proton acceptor of the active site. Position 253 (arginine 253) interacts with NADPH. Residues valine 277 and glutamate 279 each contribute to the NADPH site.

Belongs to the NAD-dependent glycerol-3-phosphate dehydrogenase family.

The protein resides in the cytoplasm. The enzyme catalyses sn-glycerol 3-phosphate + NAD(+) = dihydroxyacetone phosphate + NADH + H(+). It carries out the reaction sn-glycerol 3-phosphate + NADP(+) = dihydroxyacetone phosphate + NADPH + H(+). The protein operates within membrane lipid metabolism; glycerophospholipid metabolism. In terms of biological role, catalyzes the reduction of the glycolytic intermediate dihydroxyacetone phosphate (DHAP) to sn-glycerol 3-phosphate (G3P), the key precursor for phospholipid synthesis. The protein is Glycerol-3-phosphate dehydrogenase [NAD(P)+] of Neisseria gonorrhoeae (strain ATCC 700825 / FA 1090).